The following is a 290-amino-acid chain: ATP synthase gamma chain (290 aa).

The protein belongs to the ATPase gamma chain family. In terms of assembly, F-type ATPases have 2 components, CF(1) - the catalytic core - and CF(0) - the membrane proton channel. CF(1) has five subunits: alpha(3), beta(3), gamma(1), delta(1), epsilon(1). CF(0) has three main subunits: a, b and c.

It is found in the cell membrane. Produces ATP from ADP in the presence of a proton gradient across the membrane. The gamma chain is believed to be important in regulating ATPase activity and the flow of protons through the CF(0) complex. The sequence is that of ATP synthase gamma chain from Listeria innocua serovar 6a (strain ATCC BAA-680 / CLIP 11262).